Consider the following 616-residue polypeptide: Xaa-Pro aminopeptidase app-1 (616 aa).

The a peptide site is built by R78 and H392. Zn(2+) is bound by residues D413, D424, and H487. 3 residues coordinate a peptide: H487, H496, and E522. E522 and E536 together coordinate Zn(2+).

It belongs to the peptidase M24B family. In terms of assembly, homodimer. May interact with pid-2, pid-4 and pid-5. Zn(2+) is required as a cofactor. As to expression, specifically expressed in the intestine.

The protein resides in the cytoplasm. It catalyses the reaction Release of any N-terminal amino acid, including proline, that is linked to proline, even from a dipeptide or tripeptide.. Strongly inhibited by the metal ion chelators EDTA and 1,10-phenanthroline. Also inhibited by apstatin. Activity towards bradykinin is inhibited by Mn(2+) and Zn(2+) at all concentrations tested, whereas Co(2+) is inhibitory at concentrations above 100 uM and activatory at 10 uM. Catalyzes the removal of a penultimate prolyl residue from the N-termini of peptides, such as Arg-Pro-Pro. Has activity towards the flp-9 neuropeptide KPSFVRF-amide. The sequence is that of Xaa-Pro aminopeptidase app-1 from Caenorhabditis elegans.